A 229-amino-acid polypeptide reads, in one-letter code: UPF0488 protein C8orf33 homolog (229 aa).

Alanine 2 is modified (N-acetylalanine). Position 27 is an omega-N-methylarginine (arginine 27). The segment at 55–101 (SRAHPLGDEGGTASKKQNKKKKTRNRASVANGGEKASEKLAPEEVPL) is disordered. Positions 70–79 (KQNKKKKTRN) are enriched in basic residues. A Phosphoserine modification is found at serine 82.

This sequence belongs to the UPF0488 family.

This chain is UPF0488 protein C8orf33 homolog, found in Pongo abelii (Sumatran orangutan).